A 398-amino-acid chain; its full sequence is Succinate--CoA ligase [ADP-forming] subunit beta (398 aa).

The ATP-grasp domain occupies 9–253 (KEILNSFGVR…VREENATEVE (245 aa)). ATP contacts are provided by residues K50, 57–59 (GRG), V106, and E116. Positions 208 and 222 each coordinate Mg(2+). Substrate-binding positions include N273 and 330-332 (GIV).

This sequence belongs to the succinate/malate CoA ligase beta subunit family. As to quaternary structure, heterotetramer of two alpha and two beta subunits. Mg(2+) serves as cofactor.

The enzyme catalyses succinate + ATP + CoA = succinyl-CoA + ADP + phosphate. The catalysed reaction is GTP + succinate + CoA = succinyl-CoA + GDP + phosphate. The protein operates within carbohydrate metabolism; tricarboxylic acid cycle; succinate from succinyl-CoA (ligase route): step 1/1. In terms of biological role, succinyl-CoA synthetase functions in the citric acid cycle (TCA), coupling the hydrolysis of succinyl-CoA to the synthesis of either ATP or GTP and thus represents the only step of substrate-level phosphorylation in the TCA. The beta subunit provides nucleotide specificity of the enzyme and binds the substrate succinate, while the binding sites for coenzyme A and phosphate are found in the alpha subunit. In Christiangramia forsetii (strain DSM 17595 / CGMCC 1.15422 / KT0803) (Gramella forsetii), this protein is Succinate--CoA ligase [ADP-forming] subunit beta.